A 212-amino-acid chain; its full sequence is Uridine kinase (212 aa).

ATP is bound at residue 13–20 (GASASGKS).

It belongs to the uridine kinase family.

The protein localises to the cytoplasm. The catalysed reaction is uridine + ATP = UMP + ADP + H(+). The enzyme catalyses cytidine + ATP = CMP + ADP + H(+). It functions in the pathway pyrimidine metabolism; CTP biosynthesis via salvage pathway; CTP from cytidine: step 1/3. It participates in pyrimidine metabolism; UMP biosynthesis via salvage pathway; UMP from uridine: step 1/1. The polypeptide is Uridine kinase (Psychromonas ingrahamii (strain DSM 17664 / CCUG 51855 / 37)).